A 185-amino-acid chain; its full sequence is MINVNDLKSGVTFQLEGAIYVVLEASHSKQGRGQANVKVKVKDLRTGSTTIRSFTGGEKVERAMIEKTNMDFLYNSGEAIVLMDQETFEQIEIPLNHVEWELNFLKEGQKVMVRKFQEEVLDIELPANVTLKVVSAPDAVKGNTAQAAQKKVTLETDFVVETPLFIKEGEEILVSTETGKYVGRA.

The protein belongs to the elongation factor P family.

It is found in the cytoplasm. It functions in the pathway protein biosynthesis; polypeptide chain elongation. Functionally, involved in peptide bond synthesis. Stimulates efficient translation and peptide-bond synthesis on native or reconstituted 70S ribosomes in vitro. Probably functions indirectly by altering the affinity of the ribosome for aminoacyl-tRNA, thus increasing their reactivity as acceptors for peptidyl transferase. The sequence is that of Elongation factor P from Metamycoplasma arthritidis (strain 158L3-1) (Mycoplasma arthritidis).